Reading from the N-terminus, the 387-residue chain is Deoxyhypusine synthase (387 aa).

NAD(+)-binding positions include 108–112, 134–136, glutamate 140, and aspartate 257; these read SNLIS and SAG. Spermidine is bound at residue 139 to 140; it reads EE. Aspartate 262 is a binding site for spermidine. Glycine 304 serves as a coordination point for NAD(+). Histidine 309 is a spermidine binding site. Residue 329 to 330 participates in NAD(+) binding; that stretch reads TG. Spermidine is bound by residues 335-337 and 344-350; these read GSD and EAVSWGK. Lysine 350 (nucleophile) is an active-site residue. Position 363-364 (363-364) interacts with NAD(+); it reads DV.

It belongs to the deoxyhypusine synthase family. Homotetramer. It depends on NAD(+) as a cofactor.

The catalysed reaction is [eIF5A protein]-L-lysine + spermidine = [eIF5A protein]-deoxyhypusine + propane-1,3-diamine. The protein operates within protein modification; eIF5A hypusination. In terms of biological role, catalyzes the NAD-dependent oxidative cleavage of spermidine and the subsequent transfer of the butylamine moiety of spermidine to the epsilon-amino group of a specific lysine residue of the eIF-5A precursor protein to form the intermediate deoxyhypusine residue. This is Deoxyhypusine synthase from Saccharomyces cerevisiae (strain ATCC 204508 / S288c) (Baker's yeast).